Consider the following 334-residue polypeptide: Ornithine carbamoyltransferase, catabolic (334 aa).

Residues S57–T60, Q84, R108, and H135–Q138 each bind carbamoyl phosphate. L-ornithine is bound by residues N168, D232, and S236 to M237. Carbamoyl phosphate is bound by residues C274 to L275 and R321.

Belongs to the aspartate/ornithine carbamoyltransferase superfamily. OTCase family.

It is found in the cytoplasm. The enzyme catalyses carbamoyl phosphate + L-ornithine = L-citrulline + phosphate + H(+). It functions in the pathway amino-acid degradation; L-arginine degradation via ADI pathway; carbamoyl phosphate from L-arginine: step 2/2. Functionally, reversibly catalyzes the transfer of the carbamoyl group from carbamoyl phosphate (CP) to the N(epsilon) atom of ornithine (ORN) to produce L-citrulline. This is Ornithine carbamoyltransferase, catabolic (arcB) from Haemophilus influenzae (strain ATCC 51907 / DSM 11121 / KW20 / Rd).